Consider the following 186-residue polypeptide: Peptidyl-tRNA hydrolase (186 aa).

TRNA is bound at residue Y14. Catalysis depends on H19, which acts as the Proton acceptor. TRNA contacts are provided by F64, N66, and N112.

The protein belongs to the PTH family. In terms of assembly, monomer.

The protein localises to the cytoplasm. The enzyme catalyses an N-acyl-L-alpha-aminoacyl-tRNA + H2O = an N-acyl-L-amino acid + a tRNA + H(+). In terms of biological role, hydrolyzes ribosome-free peptidyl-tRNAs (with 1 or more amino acids incorporated), which drop off the ribosome during protein synthesis, or as a result of ribosome stalling. Its function is as follows. Catalyzes the release of premature peptidyl moieties from peptidyl-tRNA molecules trapped in stalled 50S ribosomal subunits, and thus maintains levels of free tRNAs and 50S ribosomes. The chain is Peptidyl-tRNA hydrolase from Listeria monocytogenes serovar 1/2a (strain ATCC BAA-679 / EGD-e).